We begin with the raw amino-acid sequence, 603 residues long: Iron-sulfur clusters transporter ATM1, mitochondrial (603 aa).

The helical transmembrane segment at 20–41 (VLLAVGLLVGGKVLNVQVPFFF) threads the bilayer. Positions 20-310 (VLLAVGLLVG…LGSVYRELRQ (291 aa)) constitute an ABC transmembrane type-1 domain. Residues 42 to 64 (REIVDSLNVDIAATGGTVATVAG) lie on the Mitochondrial intermembrane side of the membrane. The helical transmembrane segment at 65–88 (TMIFAYGASRIGAVVSQELRNAVF) threads the bilayer. The Mitochondrial matrix portion of the chain corresponds to 89-137 (SSVAQKAIRRVATRTFGHLLNLDLNFHLSKQTGGLTRAIDRGTKGISFL). A helical transmembrane segment spans residues 138–161 (LTSMVFHIVPTALEISMVCGILTY). Position 162 (glutamine 162) is a topological domain, mitochondrial intermembrane. A helical membrane pass occupies residues 163-183 (FGWEFAAVTALTMSAYTAFTI). Residues 184-249 (WTTAWRTKFR…SSIKVATSLA (66 aa)) lie on the Mitochondrial matrix side of the membrane. Glutathione is bound by residues 189 to 193 (RTKFR) and 252 to 255 (NSGQ). A helical membrane pass occupies residues 250–268 (FLNSGQNIIFSSALTIMMW). Residues 269–283 (LGAKGIVAGSLSVGD) lie on the Mitochondrial intermembrane side of the membrane. The chain crosses the membrane as a helical span at residues 284–305 (LVLINQLVFQLSVPLNFLGSVY). Glycine 302 serves as a coordination point for glutathione. Residues 306-603 (RELRQSLLDM…SEREAPVPVK (298 aa)) lie on the Mitochondrial matrix side of the membrane. Residues 345–581 (IRFDNVSFGY…NGLYTELWMA (237 aa)) form the ABC transporter domain. Residues tyrosine 354 and 378–389 (GPSGCGKSTLLR) contribute to the ATP site.

This sequence belongs to the ABC transporter superfamily. ABCB family. Heavy Metal importer (TC 3.A.1.210) subfamily. As to quaternary structure, homodimer.

It is found in the mitochondrion inner membrane. Functionally, performs an essential function in the generation of cytoplasmic iron-sulfur proteins by mediating the ATP-dependent export of Fe/S cluster precursors synthesized by NFS1 and other mitochondrial proteins. Hydrolyzes ATP. Binds glutathione and may function by transporting a glutathione-conjugated iron-sulfur compound. The protein is Iron-sulfur clusters transporter ATM1, mitochondrial of Chaetomium globosum (strain ATCC 6205 / CBS 148.51 / DSM 1962 / NBRC 6347 / NRRL 1970) (Soil fungus).